Here is a 289-residue protein sequence, read N- to C-terminus: Proteasome subunit beta (289 aa).

A propeptide spans 1–59 (removed in mature form; by autocatalysis); it reads MEHTPRNAGFALPAAYMSTMTSSFIDFLKAEAPDLLPRARVENMPAVPGGGSAFEPPHG. Residue threonine 60 is the Nucleophile of the active site.

The protein belongs to the peptidase T1B family. In terms of assembly, the 20S proteasome core is composed of 14 alpha and 14 beta subunits that assemble into four stacked heptameric rings, resulting in a barrel-shaped structure. The two inner rings, each composed of seven catalytic beta subunits, are sandwiched by two outer rings, each composed of seven alpha subunits. The catalytic chamber with the active sites is on the inside of the barrel. Has a gated structure, the ends of the cylinder being occluded by the N-termini of the alpha-subunits. Is capped by the proteasome-associated ATPase, ARC.

It is found in the cytoplasm. It carries out the reaction Cleavage of peptide bonds with very broad specificity.. It participates in protein degradation; proteasomal Pup-dependent pathway. The formation of the proteasomal ATPase ARC-20S proteasome complex, likely via the docking of the C-termini of ARC into the intersubunit pockets in the alpha-rings, may trigger opening of the gate for substrate entry. Interconversion between the open-gate and close-gate conformations leads to a dynamic regulation of the 20S proteasome proteolysis activity. Functionally, component of the proteasome core, a large protease complex with broad specificity involved in protein degradation. The sequence is that of Proteasome subunit beta from Saccharomonospora viridis (strain ATCC 15386 / DSM 43017 / JCM 3036 / CCUG 5913 / NBRC 12207 / NCIMB 9602 / P101) (Thermoactinomyces viridis).